The primary structure comprises 159 residues: Methyl-coenzyme M reductase operon protein D (159 aa).

As to quaternary structure, MCR is composed of three subunits: alpha, beta, and gamma. The function of proteins C and D is not known.

The protein is Methyl-coenzyme M reductase operon protein D (mcrD) of Methanococcus voltae.